The primary structure comprises 532 residues: MTDPAPLTRALLSVSDKTGLIEFATDLSSRGVELLSTGGTAKALREAGLDVRDVSEVTGFPEMMDGRVKTLHPMIHGGLLALRDNDAHVAAMKEHGIGAIDLLVVNLYPFEATVAAGADYDTCIENIDIGGPAMIRAAAKNHGAVTVLTDSSQYAGLLSELDANANKGGGTSFQFRQRMAQAAYGRTAAYDAAVSSWMAGAAEIKTPPHRAFAGSLAQEMRYGENPHQKAAFYLDGSSRPGVATAQQHQGKALSYNNINDTDAAFELVSEFAPDDGPAVAIIKHANPSGVARGNSLAEAYKAAFDCDRTSAFGGIVALNQTLDAATAEEIVQIFTEVVIAPDADEDAKAIFAAKKNLRLLTTGGLPDPRAPMVAYKQVAGGLLVQDKDTGHVDPELLEVVTKRAPSAQELADLRFAWTVAKHTKSNAIIYAKGGATVGIGAGQMSRVDSSTIAALKAARMGTECGMADTPAKGSVVASDAFFPFADGLLAAAEAGATAVIQPGGSMRDADVIAAADEAGLAMVFTGMRHFRH.

An MGS-like domain is found at 1-149 (MTDPAPLTRA…KNHGAVTVLT (149 aa)).

The protein belongs to the PurH family.

The enzyme catalyses (6R)-10-formyltetrahydrofolate + 5-amino-1-(5-phospho-beta-D-ribosyl)imidazole-4-carboxamide = 5-formamido-1-(5-phospho-D-ribosyl)imidazole-4-carboxamide + (6S)-5,6,7,8-tetrahydrofolate. It carries out the reaction IMP + H2O = 5-formamido-1-(5-phospho-D-ribosyl)imidazole-4-carboxamide. It functions in the pathway purine metabolism; IMP biosynthesis via de novo pathway; 5-formamido-1-(5-phospho-D-ribosyl)imidazole-4-carboxamide from 5-amino-1-(5-phospho-D-ribosyl)imidazole-4-carboxamide (10-formyl THF route): step 1/1. It participates in purine metabolism; IMP biosynthesis via de novo pathway; IMP from 5-formamido-1-(5-phospho-D-ribosyl)imidazole-4-carboxamide: step 1/1. The chain is Bifunctional purine biosynthesis protein PurH from Jannaschia sp. (strain CCS1).